Consider the following 65-residue polypeptide: SPbeta prophage-derived uncharacterized protein YorO (65 aa).

This Bacillus subtilis (strain 168) protein is SPbeta prophage-derived uncharacterized protein YorO (yorO).